Here is a 169-residue protein sequence, read N- to C-terminus: MPRSGGINGNFIDKTFSIVANILLRIIPTTSGEKEAFTYYRDGMSAQSEGNYAEALQNYYEAMRLEIDPYDRSYILYNIGLIHTRNGEHTKALEYYFRALERNPFLPQAFNNMAVICHYRGEQAIRQGDSEIAEAWFNQAAEYWKQAIALTPGNYIEAQNWLKITRRFK.

TPR repeat units lie at residues 36–69 (AFTY…EIDP), 73–106 (SYIL…NPFL), and 121–154 (GEQA…TPGN).

Belongs to the Ycf3 family.

Its subcellular location is the plastid. The protein localises to the chloroplast thylakoid membrane. Functionally, essential for the assembly of the photosystem I (PSI) complex. May act as a chaperone-like factor to guide the assembly of the PSI subunits. The sequence is that of Photosystem I assembly protein Ycf3 from Cucumis sativus (Cucumber).